The primary structure comprises 1028 residues: Contactin-3 (1028 aa).

The signal sequence occupies residues 1-19 (MMLSWKQLILLSFIGCLAG). Ig-like C2-type domains are found at residues 32–117 (PSNS…AKLQ), 122–209 (ENFK…RVLG), 227–313 (PKIE…GRLT), 318–402 (PYWL…AELK), 408–497 (PDFS…LVVT), and 499–593 (PTRI…AELI). Cystine bridges form between cysteine 50–cysteine 100, cysteine 144–cysteine 196, cysteine 249–cysteine 297, cysteine 339–cysteine 386, and cysteine 431–cysteine 479. N-linked (GlcNAc...) asparagine glycosylation is found at asparagine 65 and asparagine 193. N-linked (GlcNAc...) asparagine glycosylation is found at asparagine 377, asparagine 468, and asparagine 489. A disulfide bridge links cysteine 521 with cysteine 577. Fibronectin type-III domains follow at residues 600–698 (PPEN…TEEA), 703–800 (APSE…SAEE), 805–901 (APSH…TKKT), and 902–998 (PPSQ…TSMD). The interval 684–714 (GEPSLPSEKVRTEEAAPEIAPSEVSGGGGSR) is disordered. Residues asparagine 765, asparagine 860, asparagine 895, asparagine 913, asparagine 931, and asparagine 956 are each glycosylated (N-linked (GlcNAc...) asparagine). Serine 1002 is lipidated: GPI-anchor amidated serine. The propeptide at 1003–1028 (TSAISNIHPLSGYMSVLLFFIVNALW) is removed in mature form.

Belongs to the immunoglobulin superfamily. Contactin family. Interacts with PTPRG. In terms of tissue distribution, specifically expressed in brain. Ectopically expressed in tumors expressing endogenous intracisternal A-type particles (IAPs).

Its subcellular location is the cell membrane. Contactins mediate cell surface interactions during nervous system development. Has some neurite outgrowth-promoting activity. In Mus musculus (Mouse), this protein is Contactin-3 (Cntn3).